A 363-amino-acid chain; its full sequence is Spermidine/putrescine import ATP-binding protein PotA (363 aa).

The ABC transporter domain occupies 5 to 236; the sequence is IKLKHVRKEY…PVNDFVARFI (232 aa). Position 38-45 (38-45) interacts with ATP; the sequence is GPSGSGKT.

This sequence belongs to the ABC transporter superfamily. Spermidine/putrescine importer (TC 3.A.1.11.1) family. The complex is composed of two ATP-binding proteins (PotA), two transmembrane proteins (PotB and PotC) and a solute-binding protein (PotD).

It is found in the cell membrane. It catalyses the reaction ATP + H2O + polyamine-[polyamine-binding protein]Side 1 = ADP + phosphate + polyamineSide 2 + [polyamine-binding protein]Side 1.. In terms of biological role, part of the ABC transporter complex PotABCD involved in spermidine/putrescine import. Responsible for energy coupling to the transport system. This Lactobacillus johnsonii (strain CNCM I-12250 / La1 / NCC 533) protein is Spermidine/putrescine import ATP-binding protein PotA.